The chain runs to 120 residues: Alanine racemase (120 aa).

Y24 serves as the catalytic Proton acceptor; specific for L-alanine.

It belongs to the alanine racemase family. In terms of assembly, homodimer. Pyridoxal 5'-phosphate serves as cofactor.

It carries out the reaction L-alanine = D-alanine. Its function is as follows. Highly specific to D- and L-alanine and does not catalyze the racemization of other amino acids. The chain is Alanine racemase from Penaeus monodon (Giant tiger prawn).